The chain runs to 398 residues: Palmitoyl-[acyl-carrier-protein] 4-desaturase 3, chloroplastic (398 aa).

A chloroplast-targeting transit peptide spans 1 to 29 (MALRSLFLPNAFPNASSFRGGSRRGAAPR). Fe cation is bound by residues Glu-139, Glu-177, His-180, Glu-230, Glu-263, and His-266.

It belongs to the fatty acid desaturase type 2 family. In terms of assembly, homodimer. Requires Fe(2+) as cofactor. Preferentially expressed in the flower labellum. Low expression in leaves.

The protein resides in the plastid. It localises to the chloroplast stroma. It carries out the reaction hexadecanoyl-[ACP] + 2 reduced [2Fe-2S]-[ferredoxin] + O2 + 2 H(+) = (4Z)-hexadecenoyl-[ACP] + 2 oxidized [2Fe-2S]-[ferredoxin] + 2 H2O. Its pathway is lipid metabolism; fatty acid metabolism. Its function is as follows. Converts palmitoyl-ACP to (4Z)-hexadec-4-enoyl-ACP by introduction of a cis double bond between carbons 4 and 5 of the acyl chain. In Ophrys arachnitiformis subsp. archipelagi (Orchid), this protein is Palmitoyl-[acyl-carrier-protein] 4-desaturase 3, chloroplastic (SAD3).